Reading from the N-terminus, the 60-residue chain is uncharacterized protein (60 aa).

An N-terminal signal peptide occupies residues 1–21; it reads MNKLLKLFFITIIIYNNIAFA.

This is an uncharacterized protein from Rickettsia prowazekii (strain Madrid E).